The following is a 471-amino-acid chain: MGQVLPVFAHCKEAPSTASSTPDSTEGGNDDSDFRELHTAREFSEDEEEETTSQDWGTPRELTFSYIAFDGVVGSGGRRDSVVRRPRPQGRSVSEPRDPPQQSGLGDSLESIPSLSQSPEPGRRGDPDPVPPAERPLEELRLRLDQLGWVVRSAGSGEDSATSSSTPLENEEPDGLEASEAGEETNLELRLAQSLHLQLEVLTPQLSPSSGTPQAHTPSPQRSQDSNSGPDDEPLLNVVEEHWRLLEQEPITAQCLDSTDQSEFMLEPLLLVADLLYWKDTRTSGAVFTGLMASLLCLLHFSIVSVAAHLALLGLCATISLRVYRKVLQAVHRGDGTNPFQAYLDMDLTLTREQTERLSQQIASHVVSTATQLRHFFLVEDLVDSLKLALLFYILTFVGAIFNGLTLVILGVVALFTVPLLYRQHQAQIDQYVGLVTNQLSHIKAKIRAKIPGTGTLAPTASVSGSKAKAE.

Disordered stretches follow at residues 1–137, 153–181, and 205–234; these read MGQV…ERPL, SAGS…ASEA, and QLSP…DDEP. Residues 14 to 25 show a composition bias toward low complexity; the sequence is APSTASSTPDST. The segment covering 32 to 43 has biased composition (basic and acidic residues); that stretch reads SDFRELHTAREF. Ser-44 is modified (phosphoserine). 2 stretches are compositionally biased toward polar residues: residues 100–118 and 159–168; these read PQQS…LSQS and DSATSSSTPL. Residues 169-181 show a composition bias toward acidic residues; the sequence is ENEEPDGLEASEA. The segment covering 205–229 has biased composition (polar residues); it reads QLSPSSGTPQAHTPSPQRSQDSNSG. A phosphoserine mark is found at Ser-226 and Ser-228. Residues 272–471 form the Reticulon domain; sequence VADLLYWKDT…SVSGSKAKAE (200 aa). The next 2 helical transmembrane spans lie at 295-315 and 390-410; these read LLCL…LLGL and LLFY…LVIL.

As to quaternary structure, interacts with SPAST. Interacts with BACE1. Interacts (via first transmembrane domain) with ARL6IP5/GTRAP3-18. Interacts (via N-terminus) with SLC1A1/EAAC1; the interaction promotes cell surface expression of SLC1A1. As to expression, detected in skeletal and cardiac muscle (at protein level). Expressed predominantly in neural and muscular tissues.

The protein resides in the endoplasmic reticulum membrane. It is found in the sarcoplasmic reticulum membrane. The protein localises to the cell membrane. Its subcellular location is the sarcolemma. It localises to the T-tubule. The protein resides in the cytoplasm. It is found in the myofibril. The protein localises to the sarcomere. Its subcellular location is the z line. It localises to the cytoskeleton. In terms of biological role, inhibits amyloid precursor protein processing, probably by blocking BACE1 activity. Enhances trafficking of the glutamate transporter SLC1A1/EAAC1 from the endoplasmic reticulum to the cell surface. Plays a role in the translocation of SLC2A4/GLUT4 from intracellular membranes to the cell membrane which facilitates the uptake of glucose into the cell. This Mus musculus (Mouse) protein is Reticulon-2.